Reading from the N-terminus, the 203-residue chain is MKLRWFAFLIVLLAGCSSKHDYTNPPWNAKVPVQRAMQWMPISQKAGAAWGVDPQLITAIIAIESGGNPNAVSKSNAIGLMQIKASTSGRDVYRRMGWSGEPTTSELKNPERNISMGAAYLNILETGPLAGIEDPKVLQYALVVSYANGAGALLRTFSSDRKKAISKINDLDADEFLEHVARNHPAPQAPRYIYKLEQALDAM.

The signal sequence occupies residues 1–15 (MKLRWFAFLIVLLAG). Cys16 is lipidated: N-palmitoyl cysteine. Cys16 carries the S-diacylglycerol cysteine lipid modification.

The protein belongs to the transglycosylase Slt family.

The protein localises to the cell outer membrane. It catalyses the reaction Endolytic cleavage of the (1-&gt;4)-beta-glycosidic linkage between N-acetylmuramic acid (MurNAc) and N-acetylglucosamine (GlcNAc) residues in peptidoglycan with concomitant formation of a 1,6-anhydrobond in the MurNAc residue.. Functionally, murein-degrading enzyme. May play a role in recycling of muropeptides during cell elongation and/or cell division. Preferentially cleaves at a distance of more than two disaccharide units from the ends of the glycan chain. This chain is Endo-type membrane-bound lytic murein transglycosylase A, found in Escherichia coli O127:H6 (strain E2348/69 / EPEC).